The chain runs to 336 residues: Ornithine carbamoyltransferase, catabolic (336 aa).

Residues serine 62 to threonine 65, glutamine 89, arginine 113, and histidine 140 to glutamine 143 contribute to the carbamoyl phosphate site. L-ornithine is bound by residues asparagine 172, aspartate 236, and serine 240–methionine 241. Carbamoyl phosphate is bound by residues cysteine 277–leucine 278 and arginine 322.

Belongs to the aspartate/ornithine carbamoyltransferase superfamily. OTCase family.

The protein resides in the cytoplasm. The enzyme catalyses carbamoyl phosphate + L-ornithine = L-citrulline + phosphate + H(+). Its pathway is amino-acid degradation; L-arginine degradation via ADI pathway; carbamoyl phosphate from L-arginine: step 2/2. Functionally, reversibly catalyzes the transfer of the carbamoyl group from carbamoyl phosphate (CP) to the N(epsilon) atom of ornithine (ORN) to produce L-citrulline. The sequence is that of Ornithine carbamoyltransferase, catabolic from Staphylococcus aureus (strain MSSA476).